A 431-amino-acid polypeptide reads, in one-letter code: Argininosuccinate lyase (431 aa).

This sequence belongs to the lyase 1 family. Argininosuccinate lyase subfamily.

The protein resides in the cytoplasm. The catalysed reaction is 2-(N(omega)-L-arginino)succinate = fumarate + L-arginine. Its pathway is amino-acid biosynthesis; L-arginine biosynthesis; L-arginine from L-ornithine and carbamoyl phosphate: step 3/3. The protein is Argininosuccinate lyase of Xanthomonas campestris pv. campestris (strain B100).